The following is a 938-amino-acid chain: Isoleucine--tRNA ligase (938 aa).

Positions P58–H68 match the 'HIGH' region motif. Position 566 (E566) interacts with L-isoleucyl-5'-AMP. A 'KMSKS' region motif is present at residues K607–S611. K610 serves as a coordination point for ATP. Residues C906, C909, C926, and C929 each contribute to the Zn(2+) site.

Belongs to the class-I aminoacyl-tRNA synthetase family. IleS type 1 subfamily. Monomer. Zn(2+) is required as a cofactor.

It is found in the cytoplasm. The enzyme catalyses tRNA(Ile) + L-isoleucine + ATP = L-isoleucyl-tRNA(Ile) + AMP + diphosphate. Catalyzes the attachment of isoleucine to tRNA(Ile). As IleRS can inadvertently accommodate and process structurally similar amino acids such as valine, to avoid such errors it has two additional distinct tRNA(Ile)-dependent editing activities. One activity is designated as 'pretransfer' editing and involves the hydrolysis of activated Val-AMP. The other activity is designated 'posttransfer' editing and involves deacylation of mischarged Val-tRNA(Ile). This chain is Isoleucine--tRNA ligase, found in Nitratidesulfovibrio vulgaris (strain DP4) (Desulfovibrio vulgaris).